Here is a 248-residue protein sequence, read N- to C-terminus: Uridylate kinase (248 aa).

Position 11-14 (11-14 (KISG)) interacts with ATP. Gly53 contacts UMP. Positions 54 and 58 each coordinate ATP. UMP contacts are provided by residues Asp74 and 135-142 (AGSPYLTT). Thr162, Tyr169, and Asp172 together coordinate ATP.

The protein belongs to the UMP kinase family. In terms of assembly, homohexamer.

It localises to the cytoplasm. The enzyme catalyses UMP + ATP = UDP + ADP. Its pathway is pyrimidine metabolism; CTP biosynthesis via de novo pathway; UDP from UMP (UMPK route): step 1/1. Inhibited by UTP. Catalyzes the reversible phosphorylation of UMP to UDP. The polypeptide is Uridylate kinase (Chlamydia pneumoniae (Chlamydophila pneumoniae)).